The chain runs to 235 residues: Caffeoyl-CoA O-methyltransferase (235 aa).

Position 8 (Lys8) interacts with substrate. S-adenosyl-L-methionine contacts are provided by residues Val52, Glu74, Gly76–Val77, Ser82, Asp100, and Ala129. Position 151 (Asp151) interacts with substrate. An a divalent metal cation-binding site is contributed by Asp151. Asp153 provides a ligand contact to S-adenosyl-L-methionine. A divalent metal cation-binding residues include Asp177 and Asn178.

This sequence belongs to the class I-like SAM-binding methyltransferase superfamily. Cation-dependent O-methyltransferase family. CCoAMT subfamily. A divalent metal cation is required as a cofactor.

The catalysed reaction is (E)-caffeoyl-CoA + S-adenosyl-L-methionine = (E)-feruloyl-CoA + S-adenosyl-L-homocysteine + H(+). Its pathway is aromatic compound metabolism; phenylpropanoid biosynthesis. Its function is as follows. Methylates caffeoyl-CoA to feruloyl-CoA and 5-hydroxyferuloyl-CoA to sinapoyl-CoA. Plays a role in the synthesis of feruloylated polysaccharides. Involved in the reinforcement of the plant cell wall. Also involved in the responding to wounding or pathogen challenge by the increased formation of cell wall-bound ferulic acid polymers. This is Caffeoyl-CoA O-methyltransferase from Populus kitakamiensis (Aspen).